The following is a 271-amino-acid chain: NADPH-dependent 7-cyano-7-deazaguanine reductase (271 aa).

Residue 81–83 (IES) coordinates substrate. NADPH is bound at residue 83 to 84 (SK). Cysteine 177 functions as the Thioimide intermediate in the catalytic mechanism. Aspartate 184 acts as the Proton donor in catalysis. Residue 216-217 (HE) coordinates substrate. 245-246 (RG) is an NADPH binding site.

This sequence belongs to the GTP cyclohydrolase I family. QueF type 2 subfamily. In terms of assembly, homodimer.

The protein localises to the cytoplasm. The catalysed reaction is 7-aminomethyl-7-carbaguanine + 2 NADP(+) = 7-cyano-7-deazaguanine + 2 NADPH + 3 H(+). The protein operates within tRNA modification; tRNA-queuosine biosynthesis. Its function is as follows. Catalyzes the NADPH-dependent reduction of 7-cyano-7-deazaguanine (preQ0) to 7-aminomethyl-7-deazaguanine (preQ1). This Xanthomonas oryzae pv. oryzae (strain MAFF 311018) protein is NADPH-dependent 7-cyano-7-deazaguanine reductase.